Consider the following 164-residue polypeptide: MPELLKQRVETCYQQAETFFKRPFPRPQVSFKLRGQKAGVAHLHENLLRFNLQLYRENQDDFLRQTVAHEVAHLVAHQLFGDKIQAHGEEWQLIMRGVYELPPNRCHNYEVQRRVATRYIYRCPCPESDFPFTAQRHKLVRQGRRYLCRRCREILVYSGETRVE.

The 143-residue stretch at 14–156 (QQAETFFKRP…LCRRCREILV (143 aa)) folds into the SprT-like domain. A Zn(2+)-binding site is contributed by His69. Glu70 is a catalytic residue. His73 provides a ligand contact to Zn(2+).

This sequence belongs to the SprT family. Zn(2+) serves as cofactor.

It localises to the cytoplasm. This chain is Protein SprT, found in Pseudomonas entomophila (strain L48).